Here is an 891-residue protein sequence, read N- to C-terminus: Inter-alpha-trypsin inhibitor heavy chain H3 (891 aa).

A signal peptide spans 1–20 (MALAQWPYLILALLSGLAVS). A propeptide spanning residues 21–34 (GFPRNPSLLLGKRS) is cleaved from the precursor. Residues 29-158 (LLGKRSLPGR…KVTFELTYEE (130 aa)) form the VIT domain. N-linked (GlcNAc...) asparagine glycosylation occurs at Asn91. Residues 284–467 (SVVFVIDVSG…LQLQGFYEEV (184 aa)) form the VWFA domain. Residue Asp651 is modified to Aspartate 1-(chondroitin 4-sulfate)-ester. The propeptide occupies 652–891 (PHFIIQIPEK…HRDYIVPNLF (240 aa)).

It belongs to the ITIH family. As to quaternary structure, I-alpha-I plasma protease inhibitors are assembled from one or two heavy chains (H1, H2 or H3) and one light chain, bikunin. Inter-alpha-inhibitor (I-alpha-I) is composed of H1, H2 and bikunin, inter-alpha-like inhibitor (I-alpha-LI) of H2 and bikunin, and pre-alpha-inhibitor (P-alpha-I) of H3 and bikunin.

It is found in the secreted. Functionally, may act as a carrier of hyaluronan in serum or as a binding protein between hyaluronan and other matrix protein, including those on cell surfaces in tissues to regulate the localization, synthesis and degradation of hyaluronan which are essential to cells undergoing biological processes. This Bos taurus (Bovine) protein is Inter-alpha-trypsin inhibitor heavy chain H3 (ITIH3).